Reading from the N-terminus, the 1427-residue chain is DNA-directed RNA polymerase subunit beta' (1427 aa).

Residues Cys66, Cys68, Cys81, and Cys84 each contribute to the Zn(2+) site. Mg(2+) contacts are provided by Asp472, Asp474, and Asp476. Cys815, Cys889, Cys896, and Cys899 together coordinate Zn(2+).

This sequence belongs to the RNA polymerase beta' chain family. The RNAP catalytic core consists of 2 alpha, 1 beta, 1 beta' and 1 omega subunit. When a sigma factor is associated with the core the holoenzyme is formed, which can initiate transcription. Requires Mg(2+) as cofactor. The cofactor is Zn(2+).

The enzyme catalyses RNA(n) + a ribonucleoside 5'-triphosphate = RNA(n+1) + diphosphate. Functionally, DNA-dependent RNA polymerase catalyzes the transcription of DNA into RNA using the four ribonucleoside triphosphates as substrates. This Bacteroides fragilis (strain ATCC 25285 / DSM 2151 / CCUG 4856 / JCM 11019 / LMG 10263 / NCTC 9343 / Onslow / VPI 2553 / EN-2) protein is DNA-directed RNA polymerase subunit beta'.